A 136-amino-acid polypeptide reads, in one-letter code: Preprocaerulein type I' (136 aa).

An N-terminal signal peptide occupies residues 1–26 (MFKGILLCVLFAVLSANPLSQPEGFA). Residues 27–136 (DEERDVRGLA…NALGGAPQQR (110 aa)) constitute a propeptide that is removed on maturation. Residues 82–101 (GAPQQREANDERRFADDEDD) are disordered.

Belongs to the gastrin/cholecystokinin family. Expressed by the skin glands.

It is found in the secreted. Functionally, the pharmacological activities of caerulein are quite similar to the physiological activities of gastrin and related peptides. The polypeptide is Preprocaerulein type I' (Xenopus laevis (African clawed frog)).